We begin with the raw amino-acid sequence, 389 residues long: Vacuolar protein sorting-associated protein vts1 (389 aa).

The segment at asparagine 149–proline 335 is disordered. 3 stretches are compositionally biased toward polar residues: residues threonine 156 to threonine 177, threonine 184 to proline 219, and serine 227 to lysine 282. Over residues threonine 294–serine 306 the composition is skewed to low complexity. Residues alanine 308–serine 334 show a composition bias toward polar residues.

Belongs to the VTA1 family. Homodimer (in cytoplasm).

It is found in the cytoplasm. The protein resides in the endosome membrane. In terms of biological role, has a role in the formation of the multivesicular body (MVB). Required for the sorting of lipids to form intralumenal vesicles and for fluid-phase transport to the vacuole. Required for sorting several plasma membrane proteins into the MVB. The protein is Vacuolar protein sorting-associated protein vts1 (vts1) of Schizosaccharomyces pombe (strain 972 / ATCC 24843) (Fission yeast).